A 246-amino-acid chain; its full sequence is Probable transcriptional regulatory protein ACP_0521 (246 aa).

It belongs to the TACO1 family.

The protein resides in the cytoplasm. In Acidobacterium capsulatum (strain ATCC 51196 / DSM 11244 / BCRC 80197 / JCM 7670 / NBRC 15755 / NCIMB 13165 / 161), this protein is Probable transcriptional regulatory protein ACP_0521.